The chain runs to 231 residues: Ion-translocating oxidoreductase complex subunit E (231 aa).

The next 7 helical transmembrane spans lie at 18–38, 39–59, 69–89, 93–113, 127–147, 157–177, and 182–202; these read GLVQ…ITNA, LGLG…VSLV, IPVF…LINA, NLYL…VIIG, SAFD…VLGA, LFGG…IHVW, and PFLL…LIAL.

It belongs to the NqrDE/RnfAE family. As to quaternary structure, the complex is composed of six subunits: RnfA, RnfB, RnfC, RnfD, RnfE and RnfG.

Its subcellular location is the cell inner membrane. In terms of biological role, part of a membrane-bound complex that couples electron transfer with translocation of ions across the membrane. In Shewanella frigidimarina (strain NCIMB 400), this protein is Ion-translocating oxidoreductase complex subunit E.